The following is a 145-amino-acid chain: Galectin-5 (145 aa).

Ser-2 carries the post-translational modification N-acetylserine. One can recognise a Galectin domain in the interval 17-145 (FFTSIPNGLY…GDIQLTHVET (129 aa)). Residue 77–83 (WGPEERS) participates in a beta-D-galactoside binding.

In terms of assembly, monomer. In terms of tissue distribution, erythrocytes.

May function in erythrocyte differentiation. The polypeptide is Galectin-5 (Lgals5) (Rattus norvegicus (Rat)).